A 412-amino-acid chain; its full sequence is Shaggy-related protein kinase zeta (412 aa).

A compositionally biased stretch (pro residues) spans 1 to 19 (MTSIPLGPPQPPSLAPQPP). The interval 1-33 (MTSIPLGPPQPPSLAPQPPHLHGGDSLKRRPDI) is disordered. Residues 22–33 (HGGDSLKRRPDI) are compositionally biased toward basic and acidic residues. Phosphoserine is present on Ser-26. Positions 72-356 (YMAERVVGTG…ALEACAHPFF (285 aa)) constitute a Protein kinase domain. ATP contacts are provided by residues 78 to 86 (VGTGSFGIV) and Lys-101. Ser-127 is modified (phosphoserine). Phosphothreonine occurs at positions 136 and 137. Asp-197 (proton acceptor) is an active-site residue. Position 219 is a phosphoserine (Ser-219). Residue Tyr-232 is modified to Phosphotyrosine. At Ser-252 the chain carries Phosphoserine. The residue at position 293 (Thr-293) is a Phosphothreonine. Position 342 is a phosphoserine (Ser-342). The residue at position 346 (Thr-346) is a Phosphothreonine.

The protein belongs to the protein kinase superfamily. CMGC Ser/Thr protein kinase family. GSK-3 subfamily. As to quaternary structure, binds to KIB1. Interacts with beet curly top virus AL4/C4 and tomato golden mosaic virus AL4/AC4. Post-translationally, autophosphorylated mainly on threonine and serine residues.

The enzyme catalyses L-seryl-[protein] + ATP = O-phospho-L-seryl-[protein] + ADP + H(+). It carries out the reaction L-threonyl-[protein] + ATP = O-phospho-L-threonyl-[protein] + ADP + H(+). Functionally, may mediate extracellular signals to regulate transcription in differentiating cells. This chain is Shaggy-related protein kinase zeta (ASK6), found in Arabidopsis thaliana (Mouse-ear cress).